A 286-amino-acid polypeptide reads, in one-letter code: Protease HtpX homolog (286 aa).

The next 2 membrane-spanning stretches (helical) occupy residues 6 to 26 and 28 to 48; these read TCFLMVVLMLLFVFVGGYVGG and QGMIIAFLVALGMNFFSYFFS. His130 contributes to the Zn(2+) binding site. Glu131 is an active-site residue. Residue His134 participates in Zn(2+) binding. The next 2 helical transmembrane spans lie at 140–160 and 178–198; these read ILTGSIAAVMAGAIAMLANFA and AIMLIIALIMPLAATIIQMAI. Residue Glu203 coordinates Zn(2+).

Belongs to the peptidase M48B family. Zn(2+) is required as a cofactor.

It is found in the cell inner membrane. This chain is Protease HtpX homolog, found in Campylobacter curvus (strain 525.92).